Reading from the N-terminus, the 357-residue chain is D(4) dopamine receptor (357 aa).

The Extracellular portion of the chain corresponds to 1 to 32 (MGNRSAADADGLLAGRGPGTGGGAGSPGAAAA). An N-linked (GlcNAc...) asparagine glycan is attached at Asn-3. The helical transmembrane segment at 33-55 (LVGGVLLIGAVLAGNALVCVSVA) threads the bilayer. Residues 56-65 (AERALQTPTN) are Cytoplasmic-facing. Residues 66–88 (YFIVSLAAADLLLALLVLPLFVY) form a helical membrane-spanning segment. Residue Asp-75 coordinates Na(+). Topologically, residues 89-104 (SEVQGGVWQFSPGLCD) are extracellular. Cysteines 103 and 180 form a disulfide. Residues 105–126 (ALMAMDVMLCTASIFNLCAISA) form a helical membrane-spanning segment. Residue Ser-117 participates in Na(+) binding. The Cytoplasmic portion of the chain corresponds to 127–146 (DRFVAVAVPLSYNRQSGGGR). The helical transmembrane segment at 147–170 (QLLLIGATWLLSAAVAAPVLCGLN) threads the bilayer. Over 171-186 (DARGRDPAVCRLEDRD) the chain is Extracellular. Residues 187–208 (YVVYSSVCSFFLPCPVMLLLYW) form a helical membrane-spanning segment. The Cytoplasmic segment spans residues 209-284 (ATFRGLRRWE…ITGRERKAMR (76 aa)). The interval 225-261 (LHGRRPRRPSGPGPPPPEAVETPEAPEAIPTPDATLA) is disordered. A compositionally biased stretch (pro residues) spans 233-242 (PSGPGPPPPE). Residues 243-259 (AVETPEAPEAIPTPDAT) show a composition bias toward low complexity. The helical transmembrane segment at 285–307 (VLPVVVGAFLVCWTPFFVVHITG) threads the bilayer. At 308–316 (ALCPACAVP) the chain is on the extracellular side. A disulfide bridge connects residues Cys-310 and Cys-313. A helical transmembrane segment spans residues 317 to 339 (PRLVSAVTWLGYVNSALNPLIYT). At 340-357 (VFNAEFRAVFRKALRLCC) the chain is on the cytoplasmic side. Cys-357 carries S-palmitoyl cysteine lipidation.

This sequence belongs to the G-protein coupled receptor 1 family. As to quaternary structure, forms homo- and heterooligomers with DRD2. D4.7 allele exhibits higher affinity for homodimers compared to DRD2 heterodimers, while alleles D42. and 4.4 have similar affinities for both. The interaction with DRD2 may modulate agonist-induced downstream signaling. Interacts with CLIC6. Interacts with GPRASP1. May interact with ADORA2A. Interacts with KLHL12. In terms of processing, polyubiquitinated by the BCR(KLHL12) E3 ubiquitin ligase complex: polyubiquitination does not lead to degradation of DRD4 protein. Post-translationally, palmitoylated. Palmitoylation of the C-terminal Cys is important for normal expression at the cell membrane.

It localises to the cell membrane. In terms of biological role, dopamine receptor responsible for neuronal signaling in the mesolimbic system of the brain, an area of the brain that regulates emotion and complex behavior. Activated by dopamine, but also by epinephrine and norepinephrine, and by numerous synthetic agonists and drugs. Agonist binding triggers signaling via G proteins that inhibit adenylyl cyclase. Modulates the circadian rhythm of contrast sensitivity by regulating the rhythmic expression of NPAS2 in the retinal ganglion cells. The polypeptide is D(4) dopamine receptor (DRD4) (Mustela putorius furo (European domestic ferret)).